The following is a 681-amino-acid chain: Transketolase 2 (681 aa).

His30 is a substrate binding site. Thiamine diphosphate-binding positions include His69 and 116-118 (GPL). A Mg(2+)-binding site is contributed by Asp157. 2 residues coordinate thiamine diphosphate: Gly158 and Asn187. The Mg(2+) site is built by Asn187 and Ile189. Residues His263, Arg359, and Ser386 each coordinate substrate. His263 contributes to the thiamine diphosphate binding site. Positions 418 and 445 each coordinate thiamine diphosphate. Glu418 (proton donor) is an active-site residue. Positions 469, 477, and 528 each coordinate substrate.

It belongs to the transketolase family. In terms of assembly, homodimer. Mg(2+) serves as cofactor. Ca(2+) is required as a cofactor. Requires Mn(2+) as cofactor. The cofactor is Co(2+). It depends on thiamine diphosphate as a cofactor.

It carries out the reaction D-sedoheptulose 7-phosphate + D-glyceraldehyde 3-phosphate = aldehydo-D-ribose 5-phosphate + D-xylulose 5-phosphate. In terms of biological role, catalyzes the transfer of a two-carbon ketol group from a ketose donor to an aldose acceptor, via a covalent intermediate with the cofactor thiamine pyrophosphate. In Saccharomyces cerevisiae (strain ATCC 204508 / S288c) (Baker's yeast), this protein is Transketolase 2 (TKL2).